We begin with the raw amino-acid sequence, 155 residues long: Rhombotin-1 (155 aa).

2 consecutive LIM zinc-binding domains span residues 21–83 and 85–147; these read KGCA…LFGT and GNCA…GQLN.

Its subcellular location is the nucleus. May be involved in gene regulation within neural lineage cells potentially by direct DNA binding or by binding to other transcription factors. The protein is Rhombotin-1 of Danio rerio (Zebrafish).